The primary structure comprises 212 residues: NADH-quinone oxidoreductase subunit I (212 aa).

2 4Fe-4S ferredoxin-type domains span residues 76–105 (RLLE…IITD) and 115–144 (LNYS…HGDL). Positions 85, 88, 91, 95, 124, 127, 130, and 134 each coordinate [4Fe-4S] cluster.

Belongs to the complex I 23 kDa subunit family. NDH-1 is composed of 14 different subunits. Subunits NuoA, H, J, K, L, M, N constitute the membrane sector of the complex. [4Fe-4S] cluster is required as a cofactor.

The protein localises to the cell inner membrane. It carries out the reaction a quinone + NADH + 5 H(+)(in) = a quinol + NAD(+) + 4 H(+)(out). Its function is as follows. NDH-1 shuttles electrons from NADH, via FMN and iron-sulfur (Fe-S) centers, to quinones in the respiratory chain. The immediate electron acceptor for the enzyme in this species is believed to be ubiquinone. Couples the redox reaction to proton translocation (for every two electrons transferred, four hydrogen ions are translocated across the cytoplasmic membrane), and thus conserves the redox energy in a proton gradient. The protein is NADH-quinone oxidoreductase subunit I of Helicobacter hepaticus (strain ATCC 51449 / 3B1).